The chain runs to 822 residues: ATP-dependent zinc metalloprotease FTSH 7, chloroplastic (822 aa).

Low complexity-rich tracts occupy residues 1–34, 80–94, and 101–122; these read MASA…RRAS, AEAS…SSSG, and AAAA…AAAT. 2 disordered regions span residues 1-44 and 67-136; these read MASA…ASVR and PAAR…ENKW. A chloroplast-targeting transit peptide spans 1–70; it reads MASASAAAET…RVLRRPPAAR (70 aa). 2 consecutive transmembrane segments (helical) span residues 154–174 and 288–308; these read IVQG…IFAL and GGLL…AVVL. ATP is bound at residue 386–393; it reads GLPGTGKT. H611 lines the Zn(2+) pocket. E612 is an active-site residue. The Zn(2+) site is built by H615 and D694.

The protein in the N-terminal section; belongs to the AAA ATPase family. It in the C-terminal section; belongs to the peptidase M41 family. Zn(2+) serves as cofactor.

It is found in the plastid. Its subcellular location is the chloroplast thylakoid membrane. Its function is as follows. Probable ATP-dependent zinc metallopeptidase. The sequence is that of ATP-dependent zinc metalloprotease FTSH 7, chloroplastic (FTSH7) from Oryza sativa subsp. japonica (Rice).